We begin with the raw amino-acid sequence, 396 residues long: S-adenosylmethionine synthase (396 aa).

His15 lines the ATP pocket. Residue Asp17 coordinates Mg(2+). Glu43 is a K(+) binding site. Positions 56 and 99 each coordinate L-methionine. The tract at residues 99-109 is flexible loop; it reads QSADIALGVDR. ATP-binding positions include 175–177, 241–242, Asp250, 256–257, Ala273, and Lys277; these read DGK, RF, and RK. Residue Asp250 participates in L-methionine binding. Position 281 (Lys281) interacts with L-methionine.

It belongs to the AdoMet synthase family. In terms of assembly, homotetramer; dimer of dimers. Requires Mg(2+) as cofactor. K(+) serves as cofactor.

The protein resides in the cytoplasm. It carries out the reaction L-methionine + ATP + H2O = S-adenosyl-L-methionine + phosphate + diphosphate. It functions in the pathway amino-acid biosynthesis; S-adenosyl-L-methionine biosynthesis; S-adenosyl-L-methionine from L-methionine: step 1/1. Functionally, catalyzes the formation of S-adenosylmethionine (AdoMet) from methionine and ATP. The overall synthetic reaction is composed of two sequential steps, AdoMet formation and the subsequent tripolyphosphate hydrolysis which occurs prior to release of AdoMet from the enzyme. In Desulfitobacterium hafniense (strain DSM 10664 / DCB-2), this protein is S-adenosylmethionine synthase.